We begin with the raw amino-acid sequence, 387 residues long: Flap endonuclease 1 (387 aa).

Residues 1–104 are N-domain; that stretch reads MGILGLSKLI…GELAKRAERR (104 aa). Residue Asp34 coordinates Mg(2+). Residues Arg47 and Arg70 each coordinate DNA. Residues Asp86, Glu158, Glu160, Asp179, and Asp181 each coordinate Mg(2+). Residues 122–253 form an I-domain region; sequence GIEKFNRRLV…KRAIELINNY (132 aa). Glu158 serves as a coordination point for DNA. 2 residues coordinate DNA: Gly231 and Asp233. Asp233 contacts Mg(2+). The interaction with PCNA stretch occupies residues 336–344; that stretch reads TQVRLDSFF. A disordered region spans residues 345 to 387; it reads KTLPSTPNATNAAKRKAEEAKKSANNKKAKTSGGGGGRGRRPK.

Belongs to the XPG/RAD2 endonuclease family. FEN1 subfamily. In terms of assembly, interacts with PCNA. Three molecules of FEN1 bind to one PCNA trimer with each molecule binding to one PCNA monomer. PCNA stimulates the nuclease activity without altering cleavage specificity. The cofactor is Mg(2+). Post-translationally, phosphorylated. Phosphorylation upon DNA damage induces relocalization to the nuclear plasma.

Its subcellular location is the nucleus. It localises to the nucleolus. It is found in the nucleoplasm. The protein resides in the mitochondrion. Structure-specific nuclease with 5'-flap endonuclease and 5'-3' exonuclease activities involved in DNA replication and repair. During DNA replication, cleaves the 5'-overhanging flap structure that is generated by displacement synthesis when DNA polymerase encounters the 5'-end of a downstream Okazaki fragment. It enters the flap from the 5'-end and then tracks to cleave the flap base, leaving a nick for ligation. Also involved in the long patch base excision repair (LP-BER) pathway, by cleaving within the apurinic/apyrimidinic (AP) site-terminated flap. Acts as a genome stabilization factor that prevents flaps from equilibrating into structures that lead to duplications and deletions. Also possesses 5'-3' exonuclease activity on nicked or gapped double-stranded DNA, and exhibits RNase H activity. Also involved in replication and repair of rDNA and in repairing mitochondrial DNA. The protein is Flap endonuclease 1 of Drosophila yakuba (Fruit fly).